A 290-amino-acid polypeptide reads, in one-letter code: S-methyl-5'-thioadenosine phosphorylase (290 aa).

Residues Ser-11, 53–54 (RH), and 86–87 (SA) contribute to the phosphate site. Met-184 is a binding site for substrate. Phosphate is bound at residue Thr-185. Residue 208–210 (DYD) participates in substrate binding.

The protein belongs to the PNP/MTAP phosphorylase family. MTAP subfamily. In terms of assembly, homohexamer. Dimer of a homotrimer.

It catalyses the reaction S-methyl-5'-thioadenosine + phosphate = 5-(methylsulfanyl)-alpha-D-ribose 1-phosphate + adenine. It participates in amino-acid biosynthesis; L-methionine biosynthesis via salvage pathway; S-methyl-5-thio-alpha-D-ribose 1-phosphate from S-methyl-5'-thioadenosine (phosphorylase route): step 1/1. In terms of biological role, catalyzes the reversible phosphorylation of S-methyl-5'-thioadenosine (MTA) to adenine and 5-methylthioribose-1-phosphate. Involved in the breakdown of MTA, a major by-product of polyamine biosynthesis. Responsible for the first step in the methionine salvage pathway after MTA has been generated from S-adenosylmethionine. Has broad substrate specificity with 6-aminopurine nucleosides as preferred substrates. This chain is S-methyl-5'-thioadenosine phosphorylase, found in Cereibacter sphaeroides (strain ATCC 17023 / DSM 158 / JCM 6121 / CCUG 31486 / LMG 2827 / NBRC 12203 / NCIMB 8253 / ATH 2.4.1.) (Rhodobacter sphaeroides).